The chain runs to 354 residues: Uroporphyrinogen decarboxylase (354 aa).

Residues 27 to 31 (RQAGR), Asp-77, Tyr-154, Thr-209, and His-327 each bind substrate.

This sequence belongs to the uroporphyrinogen decarboxylase family. In terms of assembly, homodimer.

It is found in the cytoplasm. It catalyses the reaction uroporphyrinogen III + 4 H(+) = coproporphyrinogen III + 4 CO2. It functions in the pathway porphyrin-containing compound metabolism; protoporphyrin-IX biosynthesis; coproporphyrinogen-III from 5-aminolevulinate: step 4/4. Its function is as follows. Catalyzes the decarboxylation of four acetate groups of uroporphyrinogen-III to yield coproporphyrinogen-III. The chain is Uroporphyrinogen decarboxylase from Salmonella newport (strain SL254).